A 456-amino-acid chain; its full sequence is MLNNAMSVVILAAGKGTRMYSDLPKVLHTLAGKAMVQHVIDAANELGAAHVHLVYGHGGDLLKQALKDDNLNWVLQAEQLGTGHAMQQAAPFFADDEDILMLYGDVPLISVETLQRLRDAKPQGGIGLLTVKLDDPTGYGRITRENGKVTGIVEHKDATDEQRQIQEINTGILIANGADMKRWLAKLTNNNAQGEYYITDIIALAYQEGREIVAVHPQRLSEVEGVNNRLQLSRLERVYQSEQAEKLLLAGVMLRDPARFYLRGTLTHGRDVEIDTNVIIEGNVTLGHRVKIGTGCVIKNSVIGDDCEISPYTVVEDVNLAAACTIGPFARLRPGAELLEGAHVGNFVEMKKARLGKGSKAGHLTYLGDAEIGDNVNIGAGTITCNYDGANKFKTIIGDDVFVGSDTQLVAPVTVGKGATIAAGTTVTRNVGENALAISRVPQTQKEGWRRPVKKK.

The segment at Met1–Arg229 is pyrophosphorylase. UDP-N-acetyl-alpha-D-glucosamine-binding positions include Leu11–Gly14, Lys25, Gln76, Gly81–Thr82, Tyr103–Asp105, Gly140, Glu154, Asn169, and Asn227. Asp105 serves as a coordination point for Mg(2+). Asn227 contributes to the Mg(2+) binding site. Residues Leu230–Ala250 are linker. Residues Gly251–Lys456 form an N-acetyltransferase region. Residues Arg333 and Lys351 each contribute to the UDP-N-acetyl-alpha-D-glucosamine site. The active-site Proton acceptor is His363. 2 residues coordinate UDP-N-acetyl-alpha-D-glucosamine: Tyr366 and Asn377. Acetyl-CoA contacts are provided by residues Ala380, Asn386–Tyr387, Ser405, Ala423, and Arg440.

The protein in the N-terminal section; belongs to the N-acetylglucosamine-1-phosphate uridyltransferase family. It in the C-terminal section; belongs to the transferase hexapeptide repeat family. As to quaternary structure, homotrimer. It depends on Mg(2+) as a cofactor.

The protein resides in the cytoplasm. It carries out the reaction alpha-D-glucosamine 1-phosphate + acetyl-CoA = N-acetyl-alpha-D-glucosamine 1-phosphate + CoA + H(+). It catalyses the reaction N-acetyl-alpha-D-glucosamine 1-phosphate + UTP + H(+) = UDP-N-acetyl-alpha-D-glucosamine + diphosphate. It participates in nucleotide-sugar biosynthesis; UDP-N-acetyl-alpha-D-glucosamine biosynthesis; N-acetyl-alpha-D-glucosamine 1-phosphate from alpha-D-glucosamine 6-phosphate (route II): step 2/2. It functions in the pathway nucleotide-sugar biosynthesis; UDP-N-acetyl-alpha-D-glucosamine biosynthesis; UDP-N-acetyl-alpha-D-glucosamine from N-acetyl-alpha-D-glucosamine 1-phosphate: step 1/1. Its pathway is bacterial outer membrane biogenesis; LPS lipid A biosynthesis. Functionally, catalyzes the last two sequential reactions in the de novo biosynthetic pathway for UDP-N-acetylglucosamine (UDP-GlcNAc). The C-terminal domain catalyzes the transfer of acetyl group from acetyl coenzyme A to glucosamine-1-phosphate (GlcN-1-P) to produce N-acetylglucosamine-1-phosphate (GlcNAc-1-P), which is converted into UDP-GlcNAc by the transfer of uridine 5-monophosphate (from uridine 5-triphosphate), a reaction catalyzed by the N-terminal domain. In Shigella boydii serotype 18 (strain CDC 3083-94 / BS512), this protein is Bifunctional protein GlmU.